Reading from the N-terminus, the 126-residue chain is Phosphoribosyl-AMP cyclohydrolase (126 aa).

Position 82 (aspartate 82) interacts with Mg(2+). Cysteine 83 is a Zn(2+) binding site. Mg(2+) contacts are provided by aspartate 84 and aspartate 86. Cysteine 99 and cysteine 106 together coordinate Zn(2+).

This sequence belongs to the PRA-CH family. In terms of assembly, homodimer. The cofactor is Mg(2+). Requires Zn(2+) as cofactor.

The protein resides in the cytoplasm. The enzyme catalyses 1-(5-phospho-beta-D-ribosyl)-5'-AMP + H2O = 1-(5-phospho-beta-D-ribosyl)-5-[(5-phospho-beta-D-ribosylamino)methylideneamino]imidazole-4-carboxamide. It participates in amino-acid biosynthesis; L-histidine biosynthesis; L-histidine from 5-phospho-alpha-D-ribose 1-diphosphate: step 3/9. Its function is as follows. Catalyzes the hydrolysis of the adenine ring of phosphoribosyl-AMP. The sequence is that of Phosphoribosyl-AMP cyclohydrolase from Micrococcus luteus (strain ATCC 4698 / DSM 20030 / JCM 1464 / CCM 169 / CCUG 5858 / IAM 1056 / NBRC 3333 / NCIMB 9278 / NCTC 2665 / VKM Ac-2230) (Micrococcus lysodeikticus).